The following is a 1191-amino-acid chain: uncharacterized protein (1191 aa).

WD repeat units lie at residues 558–588, 599–629, 640–670, 682–712, 723–753, 764–794, 805–835, 995–1025, 1036–1066, 1077–1107, and 1118–1148; these read GHRDGVTSVAISSHKNLIASASRDGTVHLWT, GHTGSIYRVDFSPNGKIFATAGQDQTVKIWD, GHQDSVYSVSFSPDGEILASTSRDRTVRLWH, GHTKSVDDAQFSPDGQTLVSVCRDGQIRLWD, LPEVAFFGVNWHPNGNLLAVAADDGTVRLWT, GHDEFVTRVVFTPDGKQLFSSSSNGSVIHWS, GYPEAIFGLALASNGALLAIGAENNLVKVWD, QRKEPIRSVSLHPTLPQLAAGDEQGNLTLWN, AHGDRLNQLQYSPNGKYLLSAGREGTAKIWS, SDPLPIDQIAISPDSQWIATAASDGMVRLWD, and STSGSLLGLDFNRQGQWLLAVAQNGDLQSWP.

This is an uncharacterized protein from Synechocystis sp. (strain ATCC 27184 / PCC 6803 / Kazusa).